Consider the following 624-residue polypeptide: 1-deoxy-D-xylulose-5-phosphate synthase (624 aa).

Thiamine diphosphate is bound by residues histidine 74 and 115-117 (GHS). Aspartate 146 is a binding site for Mg(2+). Residues 147–148 (GA), asparagine 175, tyrosine 286, and glutamate 366 contribute to the thiamine diphosphate site. Asparagine 175 serves as a coordination point for Mg(2+).

It belongs to the transketolase family. DXPS subfamily. Homodimer. Requires Mg(2+) as cofactor. Thiamine diphosphate serves as cofactor.

The enzyme catalyses D-glyceraldehyde 3-phosphate + pyruvate + H(+) = 1-deoxy-D-xylulose 5-phosphate + CO2. It participates in metabolic intermediate biosynthesis; 1-deoxy-D-xylulose 5-phosphate biosynthesis; 1-deoxy-D-xylulose 5-phosphate from D-glyceraldehyde 3-phosphate and pyruvate: step 1/1. Catalyzes the acyloin condensation reaction between C atoms 2 and 3 of pyruvate and glyceraldehyde 3-phosphate to yield 1-deoxy-D-xylulose-5-phosphate (DXP). In Clostridium kluyveri (strain NBRC 12016), this protein is 1-deoxy-D-xylulose-5-phosphate synthase.